We begin with the raw amino-acid sequence, 230 residues long: Phosphoribosylaminoimidazole-succinocarboxamide synthase (230 aa).

This sequence belongs to the SAICAR synthetase family.

It carries out the reaction 5-amino-1-(5-phospho-D-ribosyl)imidazole-4-carboxylate + L-aspartate + ATP = (2S)-2-[5-amino-1-(5-phospho-beta-D-ribosyl)imidazole-4-carboxamido]succinate + ADP + phosphate + 2 H(+). The protein operates within purine metabolism; IMP biosynthesis via de novo pathway; 5-amino-1-(5-phospho-D-ribosyl)imidazole-4-carboxamide from 5-amino-1-(5-phospho-D-ribosyl)imidazole-4-carboxylate: step 1/2. In Thermotoga petrophila (strain ATCC BAA-488 / DSM 13995 / JCM 10881 / RKU-1), this protein is Phosphoribosylaminoimidazole-succinocarboxamide synthase.